Reading from the N-terminus, the 183-residue chain is Protein jagunal homolog 1 (183 aa).

Over 1-39 the chain is Cytoplasmic; the sequence is MASRAGPRAAGTDGSDFQHRERVAMHYQMSVTLKYEIKK. Ser3 is modified (phosphoserine). Residues 40–60 traverse the membrane as a helical segment; the sequence is LIYVHLVIWLLLVAKMSVGHL. Over 61 to 71 the chain is Lumenal; the sequence is RLLSHDQVAMP. Residues 72–92 traverse the membrane as a helical segment; that stretch reads YQWEYPYLLSILPSLLGLLSF. Over 93-96 the chain is Cytoplasmic; that stretch reads PRNN. The chain crosses the membrane as a helical span at residues 97–117; sequence ISYLVLSMISMGLFSIAPLIY. Residues 118 to 137 lie on the Lumenal side of the membrane; the sequence is GSMEMFPAAQQLYRHGKAYR. The helical transmembrane segment at 138–158 threads the bilayer; that stretch reads FLFGFSAVSIMYLVLVLAVQV. Over 159-183 the chain is Cytoplasmic; the sequence is HAWQLYYSKKLLDSWFTSTQEKKHK.

Belongs to the jagunal family. Interacts with COPA, COPB2 and COPG2. Ubiquitously expressed.

Its subcellular location is the endoplasmic reticulum membrane. Functionally, endoplasmic reticulum transmembrane protein involved in vesicle-mediated transport, which is required for neutrophil function. Required for vesicle-mediated transport; it is however unclear whether it is involved in early secretory pathway or intracellular protein transport. Acts as a regulator of neutrophil function, probably via its role in vesicle-mediated transport: required for defense against fungal pathogens and for granulocyte colony-stimulating factor (GM-CSF) signaling pathway; possibly by regulating glycosylation and/or targeting of proteins contributing to the viability and migration of neutrophils. The protein is Protein jagunal homolog 1 of Homo sapiens (Human).